We begin with the raw amino-acid sequence, 365 residues long: Keratin-associated protein 10-6 (365 aa).

A run of 29 repeats spans residues 41 to 45 (CCEPP), 46 to 50 (CCAPA), 67 to 71 (CCPVT), 89 to 93 (CCQQS), 99 to 103 (CCASS), 109 to 113 (CCVPV), 114 to 118 (CCKTV), 119 to 123 (CCKPV), 124 to 128 (CCVSV), 129 to 133 (CCGDS), 135 to 139 (CCQQS), 145 to 149 (CCTSS), 155 to 159 (CCVPV), 160 to 164 (CCKPV), 172 to 176 (CCQQS), 186 to 190 (CCQAV), 208 to 212 (CCQQS), 218 to 222 (CCTSS), 228 to 232 (CCVPV), 233 to 237 (CCVPV), 238 to 242 (CCVPT), 250 to 254 (CCQQS), 260 to 264 (CCTSS), 270 to 274 (CCVPV), 282 to 286 (CCQQS), 292 to 296 (CCTAS), 297 to 301 (CCRSS), 316 to 320 (CCVPV), and 334 to 338 (CCRTA). The interval 41–338 (CCEPPCCAPA…SCQPSCCRTA (298 aa)) is 29 X 5 AA repeats of C-C-X(3).

The protein belongs to the KRTAP type 10 family. As to quaternary structure, interacts with hair keratins. In terms of tissue distribution, restricted to a narrow region of the hair fiber cuticle, lying approximately 20 cell layers above the apex of the dermal papilla of the hair root; not detected in any other tissues.

In terms of biological role, in the hair cortex, hair keratin intermediate filaments are embedded in an interfilamentous matrix, consisting of hair keratin-associated proteins (KRTAP), which are essential for the formation of a rigid and resistant hair shaft through their extensive disulfide bond cross-linking with abundant cysteine residues of hair keratins. The matrix proteins include the high-sulfur and high-glycine-tyrosine keratins. This chain is Keratin-associated protein 10-6 (KRTAP10-6), found in Homo sapiens (Human).